A 360-amino-acid polypeptide reads, in one-letter code: Photosystem II protein D1 (360 aa).

Helical transmembrane passes span 32–49 (YLGWFGCLMVPTLVSATF), 121–136 (HFFIGVCSYLGREWEL), and 145–159 (WIFVAFSAPVAAASA). Histidine 121 is a chlorophyll a binding site. Residue tyrosine 129 participates in pheophytin a binding. Positions 173 and 192 each coordinate [CaMn4O5] cluster. Residues 200–221 (LHMFGVAAVFGGSLFSAMHGSL) form a helical membrane-spanning segment. A chlorophyll a-binding site is contributed by histidine 201. A quinone-binding positions include histidine 218 and 267–268 (SF). Residue histidine 218 coordinates Fe cation. Histidine 275 serves as a coordination point for Fe cation. Residues 277-291 (FLGAWPVVGIWLTAM) traverse the membrane as a helical segment. Positions 335, 336, 345, and 347 each coordinate [CaMn4O5] cluster. Positions 348-360 (CANCLLSLWPMVG) are excised as a propeptide.

The protein belongs to the reaction center PufL/M/PsbA/D family. PSII is composed of 1 copy each of membrane proteins PsbA, PsbB, PsbC, PsbD, PsbE, PsbF, PsbH, PsbI, PsbJ, PsbK, PsbL, PsbM, PsbT, PsbX, PsbY, PsbZ, Psb30/Ycf12, at least 3 peripheral proteins of the oxygen-evolving complex and a large number of cofactors. It forms dimeric complexes. Requires The D1/D2 heterodimer binds P680, chlorophylls that are the primary electron donor of PSII, and subsequent electron acceptors. It shares a non-heme iron and each subunit binds pheophytin, quinone, additional chlorophylls, carotenoids and lipids. D1 provides most of the ligands for the Mn4-Ca-O5 cluster of the oxygen-evolving complex (OEC). There is also a Cl(-1) ion associated with D1 and D2, which is required for oxygen evolution. The PSII complex binds additional chlorophylls, carotenoids and specific lipids. as cofactor. Post-translationally, tyr-164 forms a radical intermediate that is referred to as redox-active TyrZ, YZ or Y-Z. In terms of processing, C-terminally processed by CtpA; processing is essential to allow assembly of the oxygen-evolving complex and thus photosynthetic growth.

The protein resides in the plastid. Its subcellular location is the chloroplast thylakoid membrane. It catalyses the reaction 2 a plastoquinone + 4 hnu + 2 H2O = 2 a plastoquinol + O2. Functionally, photosystem II (PSII) is a light-driven water:plastoquinone oxidoreductase that uses light energy to abstract electrons from H(2)O, generating O(2) and a proton gradient subsequently used for ATP formation. It consists of a core antenna complex that captures photons, and an electron transfer chain that converts photonic excitation into a charge separation. The D1/D2 (PsbA/PsbD) reaction center heterodimer binds P680, the primary electron donor of PSII as well as several subsequent electron acceptors. The polypeptide is Photosystem II protein D1 (Karenia mikimotoi (Red tide dinoflagellate)).